We begin with the raw amino-acid sequence, 257 residues long: Deoxyribose-phosphate aldolase (257 aa).

The Proton donor/acceptor role is filled by D102. The active-site Schiff-base intermediate with acetaldehyde is K165. K199 functions as the Proton donor/acceptor in the catalytic mechanism.

The protein belongs to the DeoC/FbaB aldolase family. DeoC type 2 subfamily.

The protein resides in the cytoplasm. The catalysed reaction is 2-deoxy-D-ribose 5-phosphate = D-glyceraldehyde 3-phosphate + acetaldehyde. Its pathway is carbohydrate degradation; 2-deoxy-D-ribose 1-phosphate degradation; D-glyceraldehyde 3-phosphate and acetaldehyde from 2-deoxy-alpha-D-ribose 1-phosphate: step 2/2. In terms of biological role, catalyzes a reversible aldol reaction between acetaldehyde and D-glyceraldehyde 3-phosphate to generate 2-deoxy-D-ribose 5-phosphate. This Photobacterium profundum (strain SS9) protein is Deoxyribose-phosphate aldolase.